A 111-amino-acid chain; its full sequence is MKENKIRKNKEFRHVYRRGKSYSNKLLVLYVCKNRYNINRLGVSVSKKVGKSVVRNKVKRLIKESYRLNLDKDMKRGYDLVFIARNSSNDKDYKDIESALINLLKKAGIYN.

The protein belongs to the RnpA family. Consists of a catalytic RNA component (M1 or rnpB) and a protein subunit.

It catalyses the reaction Endonucleolytic cleavage of RNA, removing 5'-extranucleotides from tRNA precursor.. In terms of biological role, RNaseP catalyzes the removal of the 5'-leader sequence from pre-tRNA to produce the mature 5'-terminus. It can also cleave other RNA substrates such as 4.5S RNA. The protein component plays an auxiliary but essential role in vivo by binding to the 5'-leader sequence and broadening the substrate specificity of the ribozyme. In Clostridium botulinum (strain 657 / Type Ba4), this protein is Ribonuclease P protein component.